The primary structure comprises 150 residues: Large ribosomal subunit protein uL13 (150 aa).

It belongs to the universal ribosomal protein uL13 family. Part of the 50S ribosomal subunit.

In terms of biological role, this protein is one of the early assembly proteins of the 50S ribosomal subunit, although it is not seen to bind rRNA by itself. It is important during the early stages of 50S assembly. The chain is Large ribosomal subunit protein uL13 from Chlorobium phaeobacteroides (strain BS1).